Here is a 293-residue protein sequence, read N- to C-terminus: Cytosolic Fe-S cluster assembly factor CFD1 (293 aa).

25–32 provides a ligand contact to ATP; that stretch reads GKGGVGKS. Residues C201 and C204 each coordinate [4Fe-4S] cluster. S291 is subject to Phosphoserine.

Belongs to the Mrp/NBP35 ATP-binding proteins family. NUBP2/CFD1 subfamily. Heterotetramer of 2 NBP35 and 2 CFD1 chains. The cofactor is [4Fe-4S] cluster.

It localises to the cytoplasm. Component of the cytosolic iron-sulfur (Fe/S) protein assembly (CIA) machinery. Required for maturation of extramitochondrial Fe-S proteins. The NBP35-CFD1 heterotetramer forms a Fe-S scaffold complex, mediating the de novo assembly of an Fe-S cluster and its transfer to target apoproteins. Nucleotide binding/hydrolysis seems to be critcal for loading of Fe-S clusters onto CFD1 and NBP35. Required for biogenesis and export of both ribosomal subunits, which may reflect a role in assembly of the Fe/S clusters in RLI1, a protein which performs rRNA processing and ribosome export. The sequence is that of Cytosolic Fe-S cluster assembly factor CFD1 from Saccharomyces cerevisiae (strain ATCC 204508 / S288c) (Baker's yeast).